Consider the following 300-residue polypeptide: N-acetylmuramic acid 6-phosphate etherase 1 (300 aa).

The SIS domain maps to 57-220 (IATAFAQGGR…TTGAMIKSGK (164 aa)). E85 functions as the Proton donor in the catalytic mechanism. E116 is an active-site residue.

It belongs to the GCKR-like family. MurNAc-6-P etherase subfamily. In terms of assembly, homodimer.

The catalysed reaction is N-acetyl-D-muramate 6-phosphate + H2O = N-acetyl-D-glucosamine 6-phosphate + (R)-lactate. It functions in the pathway amino-sugar metabolism; 1,6-anhydro-N-acetylmuramate degradation. It participates in amino-sugar metabolism; N-acetylmuramate degradation. Its pathway is cell wall biogenesis; peptidoglycan recycling. In terms of biological role, specifically catalyzes the cleavage of the D-lactyl ether substituent of MurNAc 6-phosphate, producing GlcNAc 6-phosphate and D-lactate. Together with AnmK, is also required for the utilization of anhydro-N-acetylmuramic acid (anhMurNAc) either imported from the medium or derived from its own cell wall murein, and thus plays a role in cell wall recycling. This Vibrio cholerae serotype O1 (strain ATCC 39315 / El Tor Inaba N16961) protein is N-acetylmuramic acid 6-phosphate etherase 1.